A 104-amino-acid polypeptide reads, in one-letter code: L-rhamnose mutarotase (104 aa).

Residue tyrosine 18 coordinates substrate. Histidine 22 acts as the Proton donor in catalysis. Substrate is bound by residues tyrosine 41 and 76 to 77 (WW).

This sequence belongs to the rhamnose mutarotase family. Homodimer.

The protein resides in the cytoplasm. The enzyme catalyses alpha-L-rhamnose = beta-L-rhamnose. It participates in carbohydrate metabolism; L-rhamnose metabolism. In terms of biological role, involved in the anomeric conversion of L-rhamnose. The sequence is that of L-rhamnose mutarotase from Pectobacterium carotovorum subsp. carotovorum (strain PC1).